We begin with the raw amino-acid sequence, 50 residues long: Large ribosomal subunit protein bL32A (50 aa).

The segment covering 1–19 has biased composition (basic residues); it reads MAVPKRRKSRSNTRHRRSQ. The disordered stretch occupies residues 1-21; sequence MAVPKRRKSRSNTRHRRSQWK.

This sequence belongs to the bacterial ribosomal protein bL32 family.

The chain is Large ribosomal subunit protein bL32A from Saccharopolyspora erythraea (strain ATCC 11635 / DSM 40517 / JCM 4748 / NBRC 13426 / NCIMB 8594 / NRRL 2338).